The following is a 106-amino-acid chain: MAQKKPKRNLSALKRHRQSLKRRLRNKAKKSAIKTLSKKAVQLAQEGKAEEALKIMRKAESLIDKAAKGSTLHKNAAARRKSRLMRKVRQLLEAAGAPLIGGGLSA.

Positions 1–32 (MAQKKPKRNLSALKRHRQSLKRRLRNKAKKSA) are enriched in basic residues. The segment at 1–33 (MAQKKPKRNLSALKRHRQSLKRRLRNKAKKSAI) is disordered.

It belongs to the bacterial ribosomal protein bS20 family.

Functionally, binds directly to 16S ribosomal RNA. The polypeptide is Small ribosomal subunit protein bS20 (rpsT) (Thermus thermophilus (strain ATCC BAA-163 / DSM 7039 / HB27)).